A 549-amino-acid polypeptide reads, in one-letter code: MKNINPTQTAAWQALQKHFDEMKDVTIADLFAKDGDRFSKFSATFDDQMLVDYSKNRITEETLAKLQDLAKECDLAGAIKSMFSGEKINRTENRAVLHVALRNRSNTPILVDGKDVMPEVNAVLEKMKTFSEAIISGEWKGYTGKAITDVVNIGIGGSDLGPYMVTEALRPYKNHLNMHFVSNVDGTHIAEVLKKVNPETTLFLVASKTFTTQETMTNAHSARDWFLKAAGDEKHVAKHFAALSTNAKAVGEFGIDTANMFEFWDWVGGRYSLWSAIGLSIVLSIGFDNFVELLSGAHAMDKHFSTTPAEKNLPVLLALIGIWYNNFFGAETEAILPYDQYMHRFAAYFQQGNMESNGKYVDRNGKVVDYQTGPIIWGEPGTNGQHAFYQLIHQGTKMVPCDFIAPAITHNPLSDHHQKLLSNFFAQTEALAFGKSREVVEQEYRDQGKDPATLDYVVPFKVFEGNRPTNSILLREITPFSLGALIALYEHKIFTQGVILNIFTFDQWGVELGKQLANRILPELKDDKEISSHDSSTNGLINRYKAWRG.

Residues Lys80, Lys228, and Lys234 each carry the N6-acetyllysine modification. Glu355 acts as the Proton donor in catalysis. Catalysis depends on residues His386 and Lys514.

It belongs to the GPI family.

It localises to the cytoplasm. The enzyme catalyses alpha-D-glucose 6-phosphate = beta-D-fructose 6-phosphate. Its pathway is carbohydrate biosynthesis; gluconeogenesis. It participates in carbohydrate degradation; glycolysis; D-glyceraldehyde 3-phosphate and glycerone phosphate from D-glucose: step 2/4. In terms of biological role, catalyzes the reversible isomerization of glucose-6-phosphate to fructose-6-phosphate. This Escherichia coli O127:H6 (strain E2348/69 / EPEC) protein is Glucose-6-phosphate isomerase.